Reading from the N-terminus, the 206-residue chain is tRNA(Phe) 7-((3-amino-3-carboxypropyl)-4-demethylwyosine(37)-N(4))-methyltransferase 2 (206 aa).

The protein belongs to the TYW3 family.

It catalyses the reaction 4-demethyl-7-[(3S)-3-amino-3-carboxypropyl]wyosine(37) in tRNA(Phe) + S-adenosyl-L-methionine = 7-[(3S)-3-amino-3-carboxypropyl]wyosine(37) in tRNA(Phe) + S-adenosyl-L-homocysteine + H(+). Functionally, S-adenosyl-L-methionine-dependent methyltransferase that acts as a component of the wyosine derivatives biosynthesis pathway. Probably methylates N-4 position of wybutosine-86 to produce wybutosine-72. This is tRNA(Phe) 7-((3-amino-3-carboxypropyl)-4-demethylwyosine(37)-N(4))-methyltransferase 2 from Pyrococcus furiosus (strain ATCC 43587 / DSM 3638 / JCM 8422 / Vc1).